The sequence spans 145 residues: RING-H2 finger protein ATL18 (145 aa).

The signal sequence occupies residues 1 to 29 (MISMLFPRSPLCTAAIVFYTCVCIPLGRL). The segment at 62–105 (CPICLVEFEAEDAVTHLPRCAHLFHINCIEPWLLRGHLTCPLCR) adopts an RING-type; atypical zinc-finger fold. The helical transmembrane segment at 125-145 (STLYLSIFFFFCIFLHLLGYL) threads the bilayer.

Belongs to the RING-type zinc finger family. ATL subfamily.

Its subcellular location is the membrane. The catalysed reaction is S-ubiquitinyl-[E2 ubiquitin-conjugating enzyme]-L-cysteine + [acceptor protein]-L-lysine = [E2 ubiquitin-conjugating enzyme]-L-cysteine + N(6)-ubiquitinyl-[acceptor protein]-L-lysine.. Its pathway is protein modification; protein ubiquitination. This Arabidopsis thaliana (Mouse-ear cress) protein is RING-H2 finger protein ATL18 (ATL18).